A 578-amino-acid chain; its full sequence is MKASRFFIGTLKEAPADAEIVSHKLMVRAGMIRRVAGGIYNYLPVGLRSIRKVEAIVREEMNRAGAIELLMPAVQPAELWQESGRWEQYGPELLRFKDRKQNEFVIGPTHEEVVTDIARNQIKSYRQMPVNFYQIQTKFRDEIRPRFGVMRGREFIMKDAYSFDKDHESLKESYKKMYDAYVRIFTRIGLEFRPVAADNGSIGGSGSHEFHVIADTGEDAIAYCPTSDFAANVEAAEALPLLASRAAPAEAMQKVATPGKAKCEAVAELMGIPLERTIKSIVLATDNEGAEPTIWLLMLRGDHDLNEIKTAKLPGLAGHRFATEAEIVEWFGTPPGYLGPIGTKKPVRVVADRTVANMSDFVVGANEVDYHIAGVNWGRDLPEPVVADIRNVKAGDPSPDGKGALDICRGIEVGHVFQLGTKYSDAMGATFIDESGKAQPMVMGCYGIGITRILGAAIEQNFDDKGIVWPEAIAPFEVVLCPMGYDRSDAVREAADKLYAELAAAGIDVILDDRGERPGVMFADWELIGVPHRLVIGERGLKDGKIEYQGRRDAEATLLPADSAAAAVAEKVRAALAR.

Belongs to the class-II aminoacyl-tRNA synthetase family. ProS type 1 subfamily. As to quaternary structure, homodimer.

The protein localises to the cytoplasm. It catalyses the reaction tRNA(Pro) + L-proline + ATP = L-prolyl-tRNA(Pro) + AMP + diphosphate. In terms of biological role, catalyzes the attachment of proline to tRNA(Pro) in a two-step reaction: proline is first activated by ATP to form Pro-AMP and then transferred to the acceptor end of tRNA(Pro). As ProRS can inadvertently accommodate and process non-cognate amino acids such as alanine and cysteine, to avoid such errors it has two additional distinct editing activities against alanine. One activity is designated as 'pretransfer' editing and involves the tRNA(Pro)-independent hydrolysis of activated Ala-AMP. The other activity is designated 'posttransfer' editing and involves deacylation of mischarged Ala-tRNA(Pro). The misacylated Cys-tRNA(Pro) is not edited by ProRS. The protein is Proline--tRNA ligase of Burkholderia pseudomallei (strain 668).